The following is a 932-amino-acid chain: 2-oxoglutarate dehydrogenase E1 component (932 aa).

Belongs to the alpha-ketoglutarate dehydrogenase family. In terms of assembly, homodimer. Part of the 2-oxoglutarate dehydrogenase (OGDH) complex composed of E1 (2-oxoglutarate dehydrogenase), E2 (dihydrolipoamide succinyltransferase) and E3 (dihydrolipoamide dehydrogenase); the complex contains multiple copies of the three enzymatic components (E1, E2 and E3). The cofactor is thiamine diphosphate.

It catalyses the reaction N(6)-[(R)-lipoyl]-L-lysyl-[protein] + 2-oxoglutarate + H(+) = N(6)-[(R)-S(8)-succinyldihydrolipoyl]-L-lysyl-[protein] + CO2. Functionally, E1 component of the 2-oxoglutarate dehydrogenase (OGDH) complex which catalyzes the decarboxylation of 2-oxoglutarate, the first step in the conversion of 2-oxoglutarate to succinyl-CoA and CO(2). The polypeptide is 2-oxoglutarate dehydrogenase E1 component (Staphylococcus aureus (strain bovine RF122 / ET3-1)).